The sequence spans 330 residues: Phosphate acyltransferase (330 aa).

It belongs to the PlsX family. Homodimer. Probably interacts with PlsY.

The protein resides in the cytoplasm. The enzyme catalyses a fatty acyl-[ACP] + phosphate = an acyl phosphate + holo-[ACP]. The protein operates within lipid metabolism; phospholipid metabolism. In terms of biological role, catalyzes the reversible formation of acyl-phosphate (acyl-PO(4)) from acyl-[acyl-carrier-protein] (acyl-ACP). This enzyme utilizes acyl-ACP as fatty acyl donor, but not acyl-CoA. The polypeptide is Phosphate acyltransferase (Bacillus mycoides (strain KBAB4) (Bacillus weihenstephanensis)).